Reading from the N-terminus, the 340-residue chain is Glycerol-3-phosphate dehydrogenase [NAD(P)+] (340 aa).

Residues S23, W24, R43, K44, and K113 each coordinate NADPH. Sn-glycerol 3-phosphate-binding residues include K113, G141, and T143. A145 serves as a coordination point for NADPH. Residues K196, D249, S259, R260, and N261 each contribute to the sn-glycerol 3-phosphate site. K196 serves as the catalytic Proton acceptor. R260 contributes to the NADPH binding site. E286 is an NADPH binding site.

Belongs to the NAD-dependent glycerol-3-phosphate dehydrogenase family.

It localises to the cytoplasm. It catalyses the reaction sn-glycerol 3-phosphate + NAD(+) = dihydroxyacetone phosphate + NADH + H(+). It carries out the reaction sn-glycerol 3-phosphate + NADP(+) = dihydroxyacetone phosphate + NADPH + H(+). Its pathway is membrane lipid metabolism; glycerophospholipid metabolism. Its function is as follows. Catalyzes the reduction of the glycolytic intermediate dihydroxyacetone phosphate (DHAP) to sn-glycerol 3-phosphate (G3P), the key precursor for phospholipid synthesis. The protein is Glycerol-3-phosphate dehydrogenase [NAD(P)+] of Zymomonas mobilis subsp. mobilis (strain ATCC 31821 / ZM4 / CP4).